We begin with the raw amino-acid sequence, 164 residues long: Ribosome maturation factor RimP (164 aa).

This sequence belongs to the RimP family.

It is found in the cytoplasm. Functionally, required for maturation of 30S ribosomal subunits. The sequence is that of Ribosome maturation factor RimP from Thermodesulfovibrio yellowstonii (strain ATCC 51303 / DSM 11347 / YP87).